Reading from the N-terminus, the 446-residue chain is Phosphoglucosamine mutase (446 aa).

Ser-102 serves as the catalytic Phosphoserine intermediate. The Mg(2+) site is built by Ser-102, Asp-241, Asp-243, and Asp-245. Phosphoserine is present on Ser-102.

Belongs to the phosphohexose mutase family. Requires Mg(2+) as cofactor. Activated by phosphorylation.

The enzyme catalyses alpha-D-glucosamine 1-phosphate = D-glucosamine 6-phosphate. Its function is as follows. Catalyzes the conversion of glucosamine-6-phosphate to glucosamine-1-phosphate. The chain is Phosphoglucosamine mutase from Yersinia pseudotuberculosis serotype O:1b (strain IP 31758).